Reading from the N-terminus, the 516-residue chain is Monocarboxylate transporter 12 (516 aa).

At 1–50 (MPSGSHWTANSSKIITWLLEQPGKEEKRKTMAKVNRARSTSPPDGGWGWM) the chain is on the cytoplasmic side. 12 helical membrane passes run 51-73 (IVAG…SIFF), 88-108 (AWIH…GSVV), 116-136 (VGIM…SFAT), 145-165 (LGVL…AMVG), 178-198 (IAMS…QLLI), 207-227 (LLIL…MRPI), 283-303 (FVVL…LFVY), 319-339 (AFLM…FGWL), 350-370 (YVCY…LPML), 377-397 (VPFS…IPVV), 410-430 (ALGV…PIAG), and 440-460 (TAAF…LGFA). Residues 461–516 (RLIKRMRKTQLQFIAKESDPKLQLWTNGSVAYSVARELDQKHGEPVATAVPGYSLT) lie on the Cytoplasmic side of the membrane.

It belongs to the major facilitator superfamily. Monocarboxylate porter (TC 2.A.1.13) family. In terms of assembly, interacts with isoform 2 of BSG; this interaction is required for its localization to the plasma membrane. Most highly expressed in kidney, followed by retina, lung, heart and testis. Very weakly expressed in brain and liver. Also detected in lens.

It localises to the cell membrane. It is found in the basolateral cell membrane. The catalysed reaction is creatine(in) = creatine(out). It carries out the reaction guanidinoacetate(in) = guanidinoacetate(out). Creatine uptake is inhibited by carbonyl cyanide 3-chlorophenylhydrazone (CCCP) and by valinomycin. Functions as a transporter for creatine and as well for its precursor guanidinoacetate. Transport of creatine and GAA is independent of resting membrane potential and extracellular Na(+), Cl(-), or pH. Contributes to the process of creatine biosynthesis and distribution. The sequence is that of Monocarboxylate transporter 12 from Homo sapiens (Human).